Consider the following 89-residue polypeptide: Small ribosomal subunit protein bS20 (89 aa).

It belongs to the bacterial ribosomal protein bS20 family.

Functionally, binds directly to 16S ribosomal RNA. This is Small ribosomal subunit protein bS20 from Wolbachia pipientis subsp. Culex pipiens (strain wPip).